We begin with the raw amino-acid sequence, 223 residues long: Exosome complex component RRP46 (223 aa).

The protein belongs to the RNase PH family. As to quaternary structure, component of the RNA exosome complex. Specifically part of the catalytically inactive RNA exosome core complex (Exo-9) which may associate with the catalytic subunits RRP6 and DIS3 in cytoplasmic- and nuclear-specific RNA exosome complex forms. Exo-9 is formed by a hexameric base ring of RNase PH domain-containing subunits and a cap ring consisting of CSL4, RRP4 and RRP40.

It is found in the cytoplasm. Its subcellular location is the nucleus. The protein resides in the nucleolus. Its function is as follows. Non-catalytic component of the RNA exosome complex which has 3'-&gt;5' exoribonuclease activity and participates in a multitude of cellular RNA processing and degradation events. In the nucleus, the RNA exosome complex is involved in proper maturation of stable RNA species such as rRNA, snRNA and snoRNA, in the elimination of RNA processing by-products and non-coding 'pervasive' transcripts, such as antisense RNA species and cryptic unstable transcripts (CUTs), and of mRNAs with processing defects, thereby limiting or excluding their export to the cytoplasm. In the cytoplasm, the RNA exosome complex is involved in general mRNA turnover and in RNA surveillance pathways, preventing translation of aberrant mRNAs. The catalytic inactive RNA exosome core complex of 9 subunits (Exo-9) is proposed to play a pivotal role in the binding and presentation of RNA for ribonucleolysis, and to serve as a scaffold for the association with catalytic subunits and accessory proteins or complexes. RRP46 is part of the hexameric ring of RNase PH domain-containing subunits proposed to form a central channel which threads RNA substrates for degradation. This chain is Exosome complex component RRP46 (RRP46), found in Saccharomyces cerevisiae (strain ATCC 204508 / S288c) (Baker's yeast).